The chain runs to 360 residues: Phospho-N-acetylmuramoyl-pentapeptide-transferase (360 aa).

The next 10 membrane-spanning stretches (helical) occupy residues 26 to 46 (AILA…KLIE), 74 to 94 (MGGL…GDLG), 97 to 117 (YVWV…IDDY), 132 to 152 (WKYI…FYST), 168 to 188 (ILPQ…VGAS), 199 to 219 (GLAI…AYLS), 236 to 256 (SGEL…FLWF), 263 to 283 (VFMG…IAVL), 288 to 308 (ILLV…ILQV), and 338 to 358 (VIVR…ATLK).

The protein belongs to the glycosyltransferase 4 family. MraY subfamily. Mg(2+) is required as a cofactor.

Its subcellular location is the cell inner membrane. The enzyme catalyses UDP-N-acetyl-alpha-D-muramoyl-L-alanyl-gamma-D-glutamyl-meso-2,6-diaminopimeloyl-D-alanyl-D-alanine + di-trans,octa-cis-undecaprenyl phosphate = di-trans,octa-cis-undecaprenyl diphospho-N-acetyl-alpha-D-muramoyl-L-alanyl-D-glutamyl-meso-2,6-diaminopimeloyl-D-alanyl-D-alanine + UMP. It participates in cell wall biogenesis; peptidoglycan biosynthesis. Its function is as follows. Catalyzes the initial step of the lipid cycle reactions in the biosynthesis of the cell wall peptidoglycan: transfers peptidoglycan precursor phospho-MurNAc-pentapeptide from UDP-MurNAc-pentapeptide onto the lipid carrier undecaprenyl phosphate, yielding undecaprenyl-pyrophosphoryl-MurNAc-pentapeptide, known as lipid I. In Shewanella amazonensis (strain ATCC BAA-1098 / SB2B), this protein is Phospho-N-acetylmuramoyl-pentapeptide-transferase.